The sequence spans 1141 residues: cGMP-inhibited 3',5'-cyclic phosphodiesterase 3A (1141 aa).

The interval 1 to 42 is disordered; the sequence is MAVRGEAAQDLAKPGLGGASPARVARGNHRHRGESSPSPRGS. Residues 62-82 form a helical membrane-spanning segment; that stretch reads SALCAGSLSVLLALLVRLVGG. A disordered region spans residues 90–111; that stretch reads KSQEAAAEEEEEEGARGGVFPG. 5 helical membrane-spanning segments follow: residues 127-147, 157-177, 182-202, 207-227, and 229-249; these read LQPA…GLCL, AVAL…SLGV, LLSL…TWLV, LGVL…VSLE, and FKVA…LLLA. At Ser310 the chain carries Phosphoserine. Low complexity predominate over residues 433–445; sequence RVSSTWTTTTSAT. The interval 433–483 is disordered; the sequence is RVSSTWTTTTSATGLPTLEPAPVRRDRSASIKPHEAPSPSAVNPDSWNAPG. Over residues 454–467 the composition is skewed to basic and acidic residues; it reads PVRRDRSASIKPHE. Polar residues predominate over residues 472 to 483; sequence SAVNPDSWNAPG. Ser492, Ser520, Ser524, and Ser533 each carry phosphoserine. The segment at 505-654 is disordered; sequence VKAKKQNRPG…CQREPQRKAS (150 aa). A compositionally biased stretch (pro residues) spans 522–532; sequence VPSPSSSPPQG. Over residues 533–544 the composition is skewed to low complexity; it reads SPASSPVSNSAS. The span at 618–637 shows a compositional bias: polar residues; sequence TSQVTSDYETNNNSDSSDIL. The tract at residues 669-1141 is interaction with SLFN12; it reads KPILAPEPLV…EETLAPQPDL (473 aa). The region spanning 674–1093 is the PDEase domain; the sequence is PEPLVMDNLD…MMWKKVIEEE (420 aa). Catalysis depends on His752, which acts as the Proton donor. His752 provides a ligand contact to AMP. His756, His836, Asp837, and Asp950 together coordinate Mn(2+). Residues Asp837, Asp950, and Gln1001 each coordinate AMP. Position 837 (Asp837) interacts with Mg(2+). Disordered stretches follow at residues 1024 to 1060 and 1120 to 1141; these read GKWV…SSIA and KEEE…QPDL. Acidic residues predominate over residues 1029 to 1046; the sequence is DSDDSGDTDDPEEEEEEA. Ser1033 carries the phosphoserine modification. Thr1036 carries the post-translational modification Phosphothreonine. A Glycyl lysine isopeptide (Lys-Gly) (interchain with G-Cter in SUMO2) cross-link involves residue Lys1120.

Belongs to the cyclic nucleotide phosphodiesterase family. PDE3 subfamily. Mn(2+) serves as cofactor. Mg(2+) is required as a cofactor.

The protein resides in the membrane. It is found in the cytoplasm. Its subcellular location is the cytosol. The catalysed reaction is a nucleoside 3',5'-cyclic phosphate + H2O = a nucleoside 5'-phosphate + H(+). It catalyses the reaction 3',5'-cyclic AMP + H2O = AMP + H(+). It carries out the reaction 3',5'-cyclic GMP + H2O = GMP + H(+). The enzyme catalyses 3',5'-cyclic UMP + H2O = UMP + H(+). Its activity is regulated as follows. Inhibited by cGMP. Cyclic nucleotide phosphodiesterase with specificity for the second messengers cAMP and cGMP, which are key regulators of many important physiological processes. Also has activity toward cUMP. Independently of its catalytic activity it is part of an E2/17beta-estradiol-induced pro-apoptotic signaling pathway. E2 stabilizes the PDE3A/SLFN12 complex in the cytosol, promoting the dephosphorylation of SLFN12 and activating its pro-apoptotic ribosomal RNA/rRNA ribonuclease activity. This apoptotic pathway might be relevant in tissues with high concentration of E2 and be for instance involved in placenta remodeling. The sequence is that of cGMP-inhibited 3',5'-cyclic phosphodiesterase 3A from Mus musculus (Mouse).